We begin with the raw amino-acid sequence, 386 residues long: 3-hydroxyisobutyryl-CoA hydrolase, mitochondrial (386 aa).

A mitochondrion-targeting transit peptide spans Met1 to Thr32. At Lys92 the chain carries N6-acetyllysine; alternate. The residue at position 92 (Lys92) is an N6-succinyllysine; alternate. Positions 121, 146, 169, and 177 each coordinate substrate. At Lys221 the chain carries N6-acetyllysine; alternate. Residue Lys221 is modified to N6-succinyllysine; alternate. Ser234 bears the Phosphoserine mark. N6-succinyllysine occurs at positions 250 and 257. Lys297 is modified (N6-acetyllysine; alternate). Lys297 carries the post-translational modification N6-succinyllysine; alternate. Lys301 is modified (N6-succinyllysine). Lys353 bears the N6-acetyllysine; alternate mark. Lys353 carries the N6-succinyllysine; alternate modification. The residue at position 356 (Ser356) is a Phosphoserine. N6-acetyllysine is present on residues Lys360 and Lys365. Residue Lys377 is modified to N6-succinyllysine.

This sequence belongs to the enoyl-CoA hydratase/isomerase family.

The protein localises to the mitochondrion. The catalysed reaction is 3-hydroxy-2-methylpropanoyl-CoA + H2O = 3-hydroxy-2-methylpropanoate + CoA + H(+). Its pathway is amino-acid degradation; L-valine degradation. Functionally, hydrolyzes 3-hydroxyisobutyryl-CoA (HIBYL-CoA), a saline catabolite. Has high activity toward isobutyryl-CoA. Could be an isobutyryl-CoA dehydrogenase that functions in valine catabolism. Also hydrolyzes 3-hydroxypropanoyl-CoA. The chain is 3-hydroxyisobutyryl-CoA hydrolase, mitochondrial (HIBCH) from Bos taurus (Bovine).